The chain runs to 342 residues: Protein-glutamate methylesterase/protein-glutamine glutaminase 1 (342 aa).

Positions 3–121 (RVLVIDDSLF…NIREIGGELK (119 aa)) constitute a Response regulatory domain. D54 bears the 4-aspartylphosphate mark. The CheB-type methylesterase domain maps to 141-340 (DSNARNVVLI…EKIVETIRAM (200 aa)). Active-site residues include S153, H180, and D282.

The protein belongs to the CheB family. In terms of processing, phosphorylated by CheA. Phosphorylation of the N-terminal regulatory domain activates the methylesterase activity.

It is found in the cytoplasm. The catalysed reaction is [protein]-L-glutamate 5-O-methyl ester + H2O = L-glutamyl-[protein] + methanol + H(+). It catalyses the reaction L-glutaminyl-[protein] + H2O = L-glutamyl-[protein] + NH4(+). Involved in chemotaxis. Part of a chemotaxis signal transduction system that modulates chemotaxis in response to various stimuli. Catalyzes the demethylation of specific methylglutamate residues introduced into the chemoreceptors (methyl-accepting chemotaxis proteins or MCP) by CheR. Also mediates the irreversible deamidation of specific glutamine residues to glutamic acid. The chain is Protein-glutamate methylesterase/protein-glutamine glutaminase 1 from Methanospirillum hungatei JF-1 (strain ATCC 27890 / DSM 864 / NBRC 100397 / JF-1).